We begin with the raw amino-acid sequence, 559 residues long: MGSTEFSWKLADHPKLPKGKTLAMVVLDGWGEASANQYNCIHVAETPTMDSLKQGAPEKWRLIRAHGKAVGLPTEDDMGNSEVGHNALGAGRIYAQGAKLVDLALESGKIYDGEGFNYIKESFETNTLHLIGLLSDGGVHSRLDQLQLLLKGSAERGAKRIRVHILTDGRDVLDGSSVGFVETLENDLAQLRAKGVDAQIASGGGRMYVTMDRYENDWSVVKRGWDAQVLGEAPYKFKNAVEAVKTLRQEPKANDQYLPPFVVVDESGKAVGPIVDGDAVVTLNFRADRMVMLAKALEYEDFDKFDRVRFPKIRYAGMLQYDGELKLPNRYLVSPPEIERTSGEYLVHNGVRTFACSETVKFGHVTFFWNGNRSGYFKPEMEEYVEIPSDSGITFNVQPKMKALEIAEKARDAILSGKFDQVRVNLPNSDMVGHTGDIEATVVACKAADEAVKMIIDAIEQVGGIYVITADHGNAEDMVKRDKKGQPAMDKNGNIQILTSHTLEPVPIAIGGPGLTPGVRFRNDIPTGGLANVAATVMNLHGFEAPSDYEPTLIEVVSN.

Mn(2+)-binding residues include aspartate 28 and serine 81. The active-site Phosphoserine intermediate is serine 81. Substrate contacts are provided by residues histidine 140, 170 to 171, arginine 206, arginine 213, 286 to 289, and lysine 361; these read RD and RADR. Mn(2+) contacts are provided by aspartate 430, histidine 434, aspartate 471, histidine 472, and histidine 501.

This sequence belongs to the BPG-independent phosphoglycerate mutase family. As to quaternary structure, monomer. Requires Mn(2+) as cofactor.

It is found in the cytoplasm. It carries out the reaction (2R)-2-phosphoglycerate = (2R)-3-phosphoglycerate. Its pathway is carbohydrate degradation; glycolysis; pyruvate from D-glyceraldehyde 3-phosphate: step 3/5. Functionally, catalyzes the interconversion of 2-phosphoglycerate and 3-phosphoglycerate. The sequence is that of 2,3-bisphosphoglycerate-independent phosphoglycerate mutase (PGM1) from Mesembryanthemum crystallinum (Common ice plant).